A 542-amino-acid chain; its full sequence is Putative sodium-dependent excitatory amino acid transporter glt-6 (542 aa).

The Cytoplasmic portion of the chain corresponds to 1-15 (MKSKRRDDIVQFCRE). The next 3 membrane-spanning stretches (helical) occupy residues 16 to 36 (NTLL…GFGL), 55 to 75 (IFMQ…LISA), and 93 to 113 (LYYL…VTVI). The Extracellular segment spans residues 114 to 191 (HPGDPSIKGT…IVKRSIGMTK (78 aa)). Asn-175 is a glycosylation site (N-linked (GlcNAc...) asparagine). The next 5 membrane-spanning stretches (helical) occupy residues 192–212 (GMNI…ISQL), 234–254 (VVTL…GNLL), 265–285 (VLAL…IITV), 303–323 (GMIQ…TLPM), and 386–406 (TIAS…LLIL). Over residues 505–517 (RIGSRIGSRRPSS) the composition is skewed to low complexity. Residues 505-542 (RIGSRIGSRRPSSTNLHLSWRNNNIEPPYTPLPNDENV) are disordered. A compositionally biased stretch (polar residues) spans 518–529 (TNLHLSWRNNNI).

It belongs to the dicarboxylate/amino acid:cation symporter (DAACS) (TC 2.A.23) family.

It is found in the membrane. In Caenorhabditis elegans, this protein is Putative sodium-dependent excitatory amino acid transporter glt-6 (glt-6).